A 554-amino-acid chain; its full sequence is DNA mismatch repair protein MutL (554 aa).

Belongs to the DNA mismatch repair MutL/HexB family.

Functionally, this protein is involved in the repair of mismatches in DNA. It is required for dam-dependent methyl-directed DNA mismatch repair. May act as a 'molecular matchmaker', a protein that promotes the formation of a stable complex between two or more DNA-binding proteins in an ATP-dependent manner without itself being part of a final effector complex. This is DNA mismatch repair protein MutL from Crocosphaera subtropica (strain ATCC 51142 / BH68) (Cyanothece sp. (strain ATCC 51142)).